The following is a 262-amino-acid chain: Ribosomal RNA small subunit methyltransferase A (262 aa).

H16, L18, G43, E64, D89, and N109 together coordinate S-adenosyl-L-methionine.

Belongs to the class I-like SAM-binding methyltransferase superfamily. rRNA adenine N(6)-methyltransferase family. RsmA subfamily.

It localises to the cytoplasm. The catalysed reaction is adenosine(1518)/adenosine(1519) in 16S rRNA + 4 S-adenosyl-L-methionine = N(6)-dimethyladenosine(1518)/N(6)-dimethyladenosine(1519) in 16S rRNA + 4 S-adenosyl-L-homocysteine + 4 H(+). In terms of biological role, specifically dimethylates two adjacent adenosines (A1518 and A1519) in the loop of a conserved hairpin near the 3'-end of 16S rRNA in the 30S particle. May play a critical role in biogenesis of 30S subunits. This Xanthomonas campestris pv. campestris (strain 8004) protein is Ribosomal RNA small subunit methyltransferase A.